A 216-amino-acid chain; its full sequence is MVMTIEALKHLGRVDESRVGRTEPLPLDNRHYVNGHPLCDSFPGLALIQFGLGCFWGAERLFWQLPGVFSTAAGYAGGGVPYPTYREVCSGETGHAEVVLVVYDHTVISFEQLLQTFWESHDPTQGMRQGNDIGTQYRSVIHCTTSEQYAAASASREVYQQQLNTAGYTAITTEILHPAPPFYYAENEHQQYLAKHPNGYCGLGGTGVTCAIRLQV.

Residue C54 is part of the active site.

This sequence belongs to the MsrA Met sulfoxide reductase family.

It carries out the reaction L-methionyl-[protein] + [thioredoxin]-disulfide + H2O = L-methionyl-(S)-S-oxide-[protein] + [thioredoxin]-dithiol. It catalyses the reaction [thioredoxin]-disulfide + L-methionine + H2O = L-methionine (S)-S-oxide + [thioredoxin]-dithiol. In terms of biological role, has an important function as a repair enzyme for proteins that have been inactivated by oxidation. Catalyzes the reversible oxidation-reduction of methionine sulfoxide in proteins to methionine. The polypeptide is Peptide methionine sulfoxide reductase MsrA (Xylella fastidiosa (strain Temecula1 / ATCC 700964)).